A 474-amino-acid polypeptide reads, in one-letter code: Cryptochrome DASH (474 aa).

One can recognise a Photolyase/cryptochrome alpha/beta domain in the interval 2–136; sequence DTAVVWFRDD…ALRQRWTHTL (135 aa). Residues 161–171 show a composition bias toward basic and acidic residues; it reads EAAATVRDPRS. Residues 161 to 202 are disordered; the sequence is EAAATVRDPRSAPETVPTPDGLTPGPVPTVESLGVSEPPTDD.

This sequence belongs to the DNA photolyase class-1 family. It depends on FAD as a cofactor. Requires (6R)-5,10-methylene-5,6,7,8-tetrahydrofolate as cofactor.

Functionally, may have a photoreceptor function. Binds DNA; probably functions as a transcriptional repressor. The sequence is that of Cryptochrome DASH (cry) from Natronomonas pharaonis (strain ATCC 35678 / DSM 2160 / CIP 103997 / JCM 8858 / NBRC 14720 / NCIMB 2260 / Gabara) (Halobacterium pharaonis).